A 374-amino-acid chain; its full sequence is 5-pentadecatrienyl resorcinol O-methyltransferase (374 aa).

Residues Asp-239, Asp-261, Met-262, and Lys-275 each contribute to the S-adenosyl-L-methionine site. His-279 serves as the catalytic Proton acceptor.

The protein belongs to the class I-like SAM-binding methyltransferase superfamily. Cation-independent O-methyltransferase family. COMT subfamily. Homodimer. As to expression, expressed predominantly in root hairs.

The catalysed reaction is (8Z,11Z)-5-(pentadeca-8,11,14-trien-1-yl)resorcinol + S-adenosyl-L-methionine = (8Z,11Z)-5-(pentadeca- 8,11,14-trien-1-yl)resorcinol-3-methyl ether + S-adenosyl-L-homocysteine + H(+). Its function is as follows. O-methyltransferase involved in the biosynthetic pathway of the phytotoxin sorgoleone, a potent broad-spectrum inhibitor active against many agronomically important monocot and dicot weed species. Substrate specificity for alkylresorcinols. Strong preference for a five carbons alkyl side chain. The chain is 5-pentadecatrienyl resorcinol O-methyltransferase (OMT3) from Sorghum bicolor (Sorghum).